We begin with the raw amino-acid sequence, 345 residues long: Type II methyltransferase M.AplI (345 aa).

The SAM-dependent MTase C5-type domain maps to 25 to 325; the sequence is LVVLDLFAGC…KSVKMTLENK (301 aa). Residue Cys93 is part of the active site.

Belongs to the class I-like SAM-binding methyltransferase superfamily. C5-methyltransferase family.

It catalyses the reaction a 2'-deoxycytidine in DNA + S-adenosyl-L-methionine = a 5-methyl-2'-deoxycytidine in DNA + S-adenosyl-L-homocysteine + H(+). Its function is as follows. A methylase, recognizes the double-stranded sequence 5'-CTGCAG-3', methylates C-4 on both strands, and protects the DNA from cleavage by the AplI endonuclease. The sequence is that of Type II methyltransferase M.AplI (aplIM) from Arthrospira platensis (strain NIES-39 / UTEX 3086 / IAM M-135) (Spirulina platensis).